The sequence spans 413 residues: NADPH dehydrogenase afvA (413 aa).

Residue 53–56 participates in FMN binding; that stretch reads APLC. Tyrosine 58 lines the substrate pocket. FMN-binding residues include alanine 88 and glutamine 130. A substrate-binding site is contributed by 211–214; it reads HAAH. Residues arginine 264 and 370–371 each bind FMN; that span reads GR.

Belongs to the NADH:flavin oxidoreductase/NADH oxidase family. NamA subfamily. The cofactor is FMN.

The enzyme catalyses A + NADPH + H(+) = AH2 + NADP(+). Its pathway is secondary metabolite biosynthesis. NADPH dehydrogenase; part of the gene cluster that mediates the biosynthesis of aflavarin, a bicoumarin that exhibits anti-insectan activity against the fungivorous beetle C.hemipterus. The protein is NADPH dehydrogenase afvA of Aspergillus flavus (strain ATCC 200026 / FGSC A1120 / IAM 13836 / NRRL 3357 / JCM 12722 / SRRC 167).